Consider the following 491-residue polypeptide: Proline-rich protein PRCC (491 aa).

The segment at methionine 1 to glutamate 100 is mediates interaction with MAD2L2. Disordered stretches follow at residues methionine 1–alanine 244, isoleucine 260–glutamine 313, and glutamate 432–lysine 454. A compositionally biased stretch (acidic residues) spans aspartate 10–alanine 26. Positions alanine 40 to alanine 49 are enriched in low complexity. Residues leucine 50–valine 96 are compositionally biased toward pro residues. 6 positions are modified to phosphoserine: serine 97, serine 114, serine 157, serine 159, serine 212, and serine 218. Residues glycine 111–leucine 120 show a composition bias toward low complexity. Over residues alanine 230 to alanine 244 the composition is skewed to low complexity. The residue at position 239 (threonine 239) is a Phosphothreonine. A phosphoserine mark is found at serine 241 and serine 267. Acidic residues predominate over residues glutamine 262–alanine 272. The segment covering glycine 287 to glutamate 307 has biased composition (pro residues).

Interacts with MAD2L2; the interaction is direct. As to expression, ubiquitous in fetal and adult tissues.

It localises to the nucleus. May regulate cell cycle progression through interaction with MAD2L2. The protein is Proline-rich protein PRCC (PRCC) of Homo sapiens (Human).